Consider the following 506-residue polypeptide: Anaerobic nitric oxide reductase transcription regulator NorR (506 aa).

Residue Asp57 is modified to 4-aspartylphosphate. The region spanning 187 to 416 (MIGLSPAMTQ…LEHAIHRAVV (230 aa)) is the Sigma-54 factor interaction domain. Residues 215 to 222 (GETGTGKE) and 278 to 287 (ADNGTLFLDE) contribute to the ATP site. A DNA-binding region (H-T-H motif) is located at residues 481-500 (WAASARALETDVANLHRLAK).

It participates in nitrogen metabolism; nitric oxide reduction. Functionally, required for the expression of anaerobic nitric oxide (NO) reductase, acts as a transcriptional activator for at least the norVW operon. Activation also requires sigma-54. The sequence is that of Anaerobic nitric oxide reductase transcription regulator NorR from Salmonella agona (strain SL483).